A 110-amino-acid chain; its full sequence is Senescence associated gene 20 (110 aa).

The polypeptide is Senescence associated gene 20 (Arabidopsis thaliana (Mouse-ear cress)).